Consider the following 522-residue polypeptide: MKHRTFFSLCAKFGCLLALGACSPKIVDAGAATVPHTLSTLKTADNRPASVYLKKDKPTLIKFWASWCPLCLSELGQTEKWAQDAKFSSANLITVASPGFLHEKKDGDFQKWYAGLNYPKLPVVTDNGGTIAQSLNISVYPSWALIGKDSDVQRIVKGSINEAQALALIRDPNADLGSLKHSFYKPDTQKKDSKIMNTRTIYLAGGCFWGLEAYFQRIDGVVDAVSGYANGNTKNPSYEDVSYRHTGHAETVKVTYDADKLSLDDILQYFFRVVDPTSLNKQGNDTGTQYRSGVYYTDPAEKAVIAAALKREQQKYQLPLVVENEPLKNFYDAEEYHQDYLIKNPNGYCHIDIRKADEPLPGKTKTAPQGKGFDAATYKKPSDAELKRTLTEEQYQVTQNSATEYAFSHEYDHLFKPGIYVDVVSGEPLFSSADKYDSGCGWPSFTRPIDAKSVTEHDDFSYNMRRTEVRSHAADSHLGHVFPDGPRDKGGLRYCINGASLKFIPLEQMDAAGYGALKGKVK.

The region spanning 17–174 (LALGACSPKI…ALALIRDPNA (158 aa)) is the Thioredoxin domain. A disulfide bridge links cysteine 68 with cysteine 71. Residues 199 to 354 (RTIYLAGGCF…PNGYCHIDIR (156 aa)) are peptide methionine sulfoxide reductase A. Cysteine 207 is a catalytic residue. One can recognise a MsrB domain in the interval 383 to 506 (DAELKRTLTE…NGASLKFIPL (124 aa)). Cysteine 440 and cysteine 495 are joined by a disulfide. Residue cysteine 495 is the Nucleophile of the active site.

This sequence in the N-terminal section; belongs to the thioredoxin family. It in the central section; belongs to the MsrA Met sulfoxide reductase family. The protein in the C-terminal section; belongs to the MsrB Met sulfoxide reductase family.

The enzyme catalyses L-methionyl-[protein] + [thioredoxin]-disulfide + H2O = L-methionyl-(S)-S-oxide-[protein] + [thioredoxin]-dithiol. It catalyses the reaction [thioredoxin]-disulfide + L-methionine + H2O = L-methionine (S)-S-oxide + [thioredoxin]-dithiol. It carries out the reaction L-methionyl-[protein] + [thioredoxin]-disulfide + H2O = L-methionyl-(R)-S-oxide-[protein] + [thioredoxin]-dithiol. Functionally, has an important function as a repair enzyme for proteins that have been inactivated by oxidation. Catalyzes the reversible oxidation-reduction of methionine sulfoxide in proteins to methionine. The sequence is that of Peptide methionine sulfoxide reductase MsrA/MsrB (msrAB) from Neisseria meningitidis serogroup B (strain ATCC BAA-335 / MC58).